The sequence spans 259 residues: ATP synthase subunit a (259 aa).

The propeptide at 1 to 10 (MFNLLNTYIT) is removed in mature form. Helical transmembrane passes span 36–56 (LTTF…LYTL), 92–112 (WGLY…ANLI), 125–145 (LVFI…LGLY), 150–170 (VFFS…LLVI), 191–211 (ILAG…FMLI), and 216–236 (LVFG…EFAI).

Belongs to the ATPase A chain family. As to quaternary structure, F-type ATPases have 2 components, CF(1) - the catalytic core - and CF(0) - the membrane proton channel. In yeast, the dimeric form of ATP synthase consists of 17 polypeptides: alpha, beta, gamma, delta, epsilon, 4 (B), 5 (OSCP), 6 (A), 8, 9 (C), d, E (Tim11), f, g, h, i/j and k.

The protein localises to the mitochondrion inner membrane. Mitochondrial membrane ATP synthase (F(1)F(0) ATP synthase or Complex V) produces ATP from ADP in the presence of a proton gradient across the membrane which is generated by electron transport complexes of the respiratory chain. F-type ATPases consist of two structural domains, F(1) - containing the extramembraneous catalytic core and F(0) - containing the membrane proton channel, linked together by a central stalk and a peripheral stalk. During catalysis, ATP synthesis in the catalytic domain of F(1) is coupled via a rotary mechanism of the central stalk subunits to proton translocation. Key component of the proton channel; it may play a direct role in the translocation of protons across the membrane. The chain is ATP synthase subunit a (ATP6) from Saccharomyces cerevisiae (strain ATCC 204508 / S288c) (Baker's yeast).